We begin with the raw amino-acid sequence, 36 residues long: Photosystem I reaction center subunit VIII (36 aa).

A helical transmembrane segment spans residues 9–29 (ILVPLVGLVFPAIAMASLFLY).

This sequence belongs to the PsaI family.

It localises to the plastid. The protein localises to the chloroplast thylakoid membrane. In terms of biological role, may help in the organization of the PsaL subunit. In Oltmannsiellopsis viridis (Marine flagellate), this protein is Photosystem I reaction center subunit VIII.